The sequence spans 115 residues: Large ribosomal subunit protein bL19 (115 aa).

It belongs to the bacterial ribosomal protein bL19 family.

In terms of biological role, this protein is located at the 30S-50S ribosomal subunit interface and may play a role in the structure and function of the aminoacyl-tRNA binding site. The protein is Large ribosomal subunit protein bL19 of Escherichia coli O139:H28 (strain E24377A / ETEC).